Here is an 853-residue protein sequence, read N- to C-terminus: Auxin response factor 23 (853 aa).

The interval 118-141 (PESKQQEDNGSTEEEVPSAPAAGH) is disordered. Residues 149–251 (FCKTLTASDT…ELRVGVRRAM (103 aa)) constitute a DNA-binding region (TF-B3). Disordered stretches follow at residues 422–484 (ESEP…RMQM) and 647–723 (PAKS…QGVS). The span at 425 to 455 (PNGTQRTFQTQENATPKSGFGNSSELESAQK) shows a compositional bias: polar residues. The span at 672 to 686 (EWRRPDVTEVEKCSD) shows a compositional bias: basic and acidic residues. Positions 706 to 723 (PSSQQASRNMSCKSQGVS) are enriched in polar residues. The PB1 domain maps to 725–809 (RSCKKVHKQG…HKIFIYTREE (85 aa)). Positions 815–853 (PGTLNSRSEDSHANSMERGSVGREMRGCLSTSSLNSENC) are disordered. Polar residues predominate over residues 843–853 (LSTSSLNSENC).

The protein belongs to the ARF family. As to quaternary structure, homodimers and heterodimers. Interacts with CRL1. Expressed in roots, culms, leaves and young panicles.

It is found in the nucleus. Functionally, auxin response factors (ARFs) are transcriptional factors that bind specifically to the DNA sequence 5'-TGTCTC-3' found in the auxin-responsive promoter elements (AuxREs). The polypeptide is Auxin response factor 23 (ARF23) (Oryza sativa subsp. japonica (Rice)).